A 405-amino-acid chain; its full sequence is MSDVKRVVLAFSGGLDTSVILKWLQQTYQCEVVTFTADLGQGEELEPARAKAKLMGVPDEHIFIDDLREEFVKDYVFPMMRGNALYEGLYLLGTSIARPLIAKRQIEIARAVGADAVSHGATGKGNDQVRFELGYYGLAPDIRVIAPWREWDLTSRTALIDFAEKHQIPVPKDKRGESPFSTDANLLHTSSEGKVLEDPWEEVPDYVYSRTVNPEDAPDQPEIITIDFERGDGVALNGEGMSPATLLTALNELGRKHGIGRLDLVENRFVGMKSRGMYETPGGAIYHLAHRGIEQITLDRGAAHLKDELAPRYAELIYNGFWFSPEREMLQAAIDHSQEKVTGTVRLKLYKGGVHVIGRKSPYTLYSEKVVTFEDDAGAYDQRDAAGFIKLNALRLRLLGRRDGR.

Residues 10 to 18 and Ala37 each bind ATP; that span reads AFSGGLDTS. Residues Tyr90 and Ser95 each coordinate L-citrulline. Position 120 (Gly120) interacts with ATP. Positions 122, 126, and 127 each coordinate L-aspartate. Asn126 serves as a coordination point for L-citrulline. L-citrulline-binding residues include Arg130, Ser181, Ser190, Glu266, and Tyr278.

The protein belongs to the argininosuccinate synthase family. Type 1 subfamily. As to quaternary structure, homotetramer.

The protein localises to the cytoplasm. It catalyses the reaction L-citrulline + L-aspartate + ATP = 2-(N(omega)-L-arginino)succinate + AMP + diphosphate + H(+). It participates in amino-acid biosynthesis; L-arginine biosynthesis; L-arginine from L-ornithine and carbamoyl phosphate: step 2/3. This Rhizorhabdus wittichii (strain DSM 6014 / CCUG 31198 / JCM 15750 / NBRC 105917 / EY 4224 / RW1) (Sphingomonas wittichii) protein is Argininosuccinate synthase.